The chain runs to 474 residues: Cryptochrome DASH (474 aa).

Residues 2–136 (DTAVVWFRDD…ALRQRWTHTL (135 aa)) form the Photolyase/cryptochrome alpha/beta domain. Over residues 161 to 171 (EAAATVRDPRS) the composition is skewed to basic and acidic residues. The interval 161–202 (EAAATVRDPRSAPETVPTPDGLTPGPVPTVESLGVSEPPTDD) is disordered.

This sequence belongs to the DNA photolyase class-1 family. Requires FAD as cofactor. It depends on (6R)-5,10-methylene-5,6,7,8-tetrahydrofolate as a cofactor.

Its function is as follows. May have a photoreceptor function. Binds DNA; probably functions as a transcriptional repressor. The sequence is that of Cryptochrome DASH (cry) from Natronomonas pharaonis (strain ATCC 35678 / DSM 2160 / CIP 103997 / JCM 8858 / NBRC 14720 / NCIMB 2260 / Gabara) (Halobacterium pharaonis).